A 248-amino-acid polypeptide reads, in one-letter code: Probable transcriptional regulatory protein P9303_05381 (248 aa).

This sequence belongs to the TACO1 family.

It localises to the cytoplasm. In Prochlorococcus marinus (strain MIT 9303), this protein is Probable transcriptional regulatory protein P9303_05381.